A 191-amino-acid polypeptide reads, in one-letter code: Small ribosomal subunit protein uS5 (191 aa).

Residues 1-20 (MAAERERGGRERSRDREERD) form a disordered region. The region spanning 23–86 (FVDKLVHINR…EAAKRNLTRV (64 aa)) is the S5 DRBM domain.

This sequence belongs to the universal ribosomal protein uS5 family. Part of the 30S ribosomal subunit. Contacts proteins S4 and S8.

In terms of biological role, with S4 and S12 plays an important role in translational accuracy. Functionally, located at the back of the 30S subunit body where it stabilizes the conformation of the head with respect to the body. In Rhodopseudomonas palustris (strain HaA2), this protein is Small ribosomal subunit protein uS5.